Consider the following 337-residue polypeptide: Viral cathepsin (337 aa).

The first 16 residues, 1 to 16, serve as a signal peptide directing secretion; it reads MNKLLILFLLLNAALT. Positions 17–126 are cleaved as a propeptide — activation peptide; the sequence is RQDNHASANN…VVDGPAQRQR (110 aa). 3 disulfides stabilise this stretch: cysteine 147–cysteine 188, cysteine 181–cysteine 221, and cysteine 276–cysteine 324. Cysteine 150 is an active-site residue. Catalysis depends on residues histidine 283 and asparagine 303.

It belongs to the peptidase C1 family. In terms of processing, synthesized as an inactive proenzyme and activated by proteolytic removal of the inhibitory propeptide.

It carries out the reaction Endopeptidase of broad specificity, hydrolyzing substrates of both cathepsin L and cathepsin B.. Cysteine protease that plays an essential role in host liquefaction to facilitate horizontal transmission of the virus. May participate in the degradation of foreign protein expressed by the baculovirus system. The chain is Viral cathepsin (VCATH) from Lepidoptera (butterflies and moths).